The chain runs to 257 residues: DNA repair protein RecO (257 aa).

This sequence belongs to the RecO family.

Involved in DNA repair and RecF pathway recombination. The protein is DNA repair protein RecO of Clostridium kluyveri (strain ATCC 8527 / DSM 555 / NBRC 12016 / NCIMB 10680 / K1).